A 751-amino-acid polypeptide reads, in one-letter code: Ribosomal RNA large subunit methyltransferase K/L (751 aa).

The 112-residue stretch at 44-155 (LAYRTCLWSR…KNKLVLSIDL (112 aa)) folds into the THUMP domain.

This sequence belongs to the methyltransferase superfamily. RlmKL family.

Its subcellular location is the cytoplasm. It catalyses the reaction guanosine(2445) in 23S rRNA + S-adenosyl-L-methionine = N(2)-methylguanosine(2445) in 23S rRNA + S-adenosyl-L-homocysteine + H(+). It carries out the reaction guanosine(2069) in 23S rRNA + S-adenosyl-L-methionine = N(2)-methylguanosine(2069) in 23S rRNA + S-adenosyl-L-homocysteine + H(+). In terms of biological role, specifically methylates the guanine in position 2445 (m2G2445) and the guanine in position 2069 (m7G2069) of 23S rRNA. The chain is Ribosomal RNA large subunit methyltransferase K/L from Cellvibrio japonicus (strain Ueda107) (Pseudomonas fluorescens subsp. cellulosa).